A 289-amino-acid chain; its full sequence is 2-dehydro-3-deoxyphosphooctonate aldolase (289 aa).

It belongs to the KdsA family.

It localises to the cytoplasm. The catalysed reaction is D-arabinose 5-phosphate + phosphoenolpyruvate + H2O = 3-deoxy-alpha-D-manno-2-octulosonate-8-phosphate + phosphate. It functions in the pathway carbohydrate biosynthesis; 3-deoxy-D-manno-octulosonate biosynthesis; 3-deoxy-D-manno-octulosonate from D-ribulose 5-phosphate: step 2/3. It participates in bacterial outer membrane biogenesis; lipopolysaccharide biosynthesis. In Cupriavidus taiwanensis (strain DSM 17343 / BCRC 17206 / CCUG 44338 / CIP 107171 / LMG 19424 / R1) (Ralstonia taiwanensis (strain LMG 19424)), this protein is 2-dehydro-3-deoxyphosphooctonate aldolase.